We begin with the raw amino-acid sequence, 499 residues long: MARKMLVDGEIDKVAADEANATHYDFDLFVIGAGSGGVRAARFSANHGAKVGICELPFHPISSEEIGGVGGTCVIRGCVPKKILVYGATYGGELEDAKNYGWEINEKVDFTWKKLLQKKTDEILRLNNIYKRLLANAAVKLYEGEGRVVGPNEVEVRQIDGTKISYTAKHILIATGSRAQKPNIPGHELAITSDEALSLEEFPKRAIVLGGGYIAVEFASIWRGMGATVDLFFRKELPLRGFDDEMRALVARNLEGRGVNLHPQTSLTQLTKTDQGIKVISSHGEEFVADVVLFATGRSPNTKRLNLEAVGVELDQAGAVKVDEYSRTNIPSIWAVGDATNRINLTPVALMEATCFANTAFGGKPTKAEYSNVACAVFCIPPLAVVGLSEEEAVEQATGDILVFTSGFNPMKNTISGRQEKTLMKLIVDEKSDKVIGASMCGPDAAEIMQGIAIALKCGATKAQFDSTVGIHPSSAEEFVTMRSVTRRIAHKPKPKTNL.

FAD is bound by residues serine 35, glycine 36, glutamate 55, threonine 72, cysteine 73, and lysine 81. Serine 35 is a glutathione binding site. Residues cysteine 73 and cysteine 78 are joined by a disulfide bond. Glutathione is bound at residue tyrosine 130. Glycine 146 is an FAD binding site. NADP(+) contacts are provided by glycine 211, isoleucine 214, glutamate 217, arginine 234, arginine 240, and glycine 297. FAD contacts are provided by aspartate 338 and threonine 346. An NADP(+)-binding site is contributed by alanine 376. Histidine 472 contributes to the FAD binding site. Histidine 472 functions as the Proton acceptor in the catalytic mechanism.

The protein belongs to the class-I pyridine nucleotide-disulfide oxidoreductase family. In terms of assembly, homodimer. The cofactor is FAD.

It localises to the cytoplasm. The catalysed reaction is 2 glutathione + NADP(+) = glutathione disulfide + NADPH + H(+). Catalyzes the reduction of glutathione disulfide (GSSG) to reduced glutathione (GSH). Constitutes the major mechanism to maintain a high GSH:GSSG ratio in the cytosol. The polypeptide is Glutathione reductase, cytosolic (Arabidopsis thaliana (Mouse-ear cress)).